Reading from the N-terminus, the 217-residue chain is Adenylate kinase (217 aa).

10–15 (GAGKGT) provides a ligand contact to ATP. Residues 30-59 (STGDMLRAAVKAGTPLGLEAKKVMDSGGLV) are NMP. Residues T31, R36, 57–59 (GLV), 85–88 (GFPR), and Q92 each bind AMP. The segment at 122–159 (GRRVHVASGRTYHVKFNPPKVAGVDDVTGEPLIQRDDD) is LID. Residues R123 and 132–133 (TY) contribute to the ATP site. AMP is bound by residues R156 and R167. G203 serves as a coordination point for ATP.

It belongs to the adenylate kinase family. As to quaternary structure, monomer.

It is found in the cytoplasm. The enzyme catalyses AMP + ATP = 2 ADP. The protein operates within purine metabolism; AMP biosynthesis via salvage pathway; AMP from ADP: step 1/1. Catalyzes the reversible transfer of the terminal phosphate group between ATP and AMP. Plays an important role in cellular energy homeostasis and in adenine nucleotide metabolism. In Methylibium petroleiphilum (strain ATCC BAA-1232 / LMG 22953 / PM1), this protein is Adenylate kinase.